Reading from the N-terminus, the 301-residue chain is Probable alpha-L-glutamate ligase (301 aa).

In terms of domain architecture, ATP-grasp spans 104–287; the sequence is LQLLSRKGIG…IAGLIVAYME (184 aa). Residues lysine 141, 178 to 179, aspartate 187, and 211 to 213 each bind ATP; these read EF and RSN. Positions 248, 260, and 262 each coordinate Mg(2+). The Mn(2+) site is built by aspartate 248, glutamate 260, and asparagine 262.

Belongs to the RimK family. Mg(2+) is required as a cofactor. Mn(2+) serves as cofactor.

The sequence is that of Probable alpha-L-glutamate ligase from Cellvibrio japonicus (strain Ueda107) (Pseudomonas fluorescens subsp. cellulosa).